The chain runs to 206 residues: Flavin reductase (NADPH) (206 aa).

The NADP(+) site is built by Gly-10, Thr-12, Gly-13, Thr-15, Arg-35, Ser-38, and Arg-39. Phosphoserine is present on Ser-42. Asp-54, Val-55, Leu-75, and Gly-76 together coordinate NADP(+). Ser-82 is modified (phosphoserine). NADP(+)-binding residues include Met-87, Cys-109, His-132, His-153, and Ile-154. Cys-109 (S-nitroso-cysteine intermediate; for S-nitroso-CoA-dependent nitrosyltransferase activity) is an active-site residue. The active-site S-nitroso-cysteine intermediate; for S-nitroso-CoA-dependent nitrosyltransferase activity is Cys-188.

This sequence belongs to the BLVRB family. Monomer.

The protein localises to the cytoplasm. It catalyses the reaction reduced riboflavin + NADP(+) = riboflavin + NADPH + 2 H(+). The catalysed reaction is bilirubin IXbeta + NADP(+) = biliverdin IXbeta + NADPH + H(+). The enzyme catalyses FMNH2 + NAD(+) = FMN + NADH + 2 H(+). It carries out the reaction FMNH2 + NADP(+) = FMN + NADPH + 2 H(+). It catalyses the reaction S-nitroso-CoA + L-cysteinyl-[protein] = S-nitroso-L-cysteinyl-[protein] + CoA. The catalysed reaction is L-cysteinyl-[SCAN] + S-nitroso-CoA = S-nitroso-L-cysteinyl-[SCAN] + CoA. The enzyme catalyses S-nitroso-L-cysteinyl-[SCAN] + L-cysteinyl-[protein] = L-cysteinyl-[SCAN] + S-nitroso-L-cysteinyl-[protein]. In terms of biological role, enzyme that can both act as a NAD(P)H-dependent reductase and a S-nitroso-CoA-dependent nitrosyltransferase. Promotes fetal heme degradation during development. Also expressed in adult tissues, where it acts as a regulator of hematopoiesis, intermediary metabolism (glutaminolysis, glycolysis, TCA cycle and pentose phosphate pathway) and insulin signaling. Has a broad specificity oxidoreductase activity by catalyzing the NAD(P)H-dependent reduction of a variety of flavins, such as riboflavin, FAD or FMN, biliverdins, methemoglobin and PQQ (pyrroloquinoline quinone). Contributes to fetal heme catabolism by catalyzing reduction of biliverdin IXbeta into bilirubin IXbeta in the liver. Biliverdin IXbeta, which constitutes the major heme catabolite in the fetus is not present in adult. Does not reduce bilirubin IXalpha. Can also reduce the complexed Fe(3+) iron to Fe(2+) in the presence of FMN and NADPH. Acts as a protein nitrosyltransferase by catalyzing nitrosylation of cysteine residues of target proteins, such as HMOX2, INSR and IRS1. S-nitroso-CoA-dependent nitrosyltransferase activity is mediated via a 'ping-pong' mechanism: BLVRB first associates with both S-nitroso-CoA and protein substrate, nitric oxide group is then transferred from S-nitroso-CoA to Cys-109 and Cys-188 residues of BLVRB and from S-nitroso-BLVRB to the protein substrate. Inhibits insulin signaling by mediating nitrosylation of INSR and IRS1, leading to their inhibition. The sequence is that of Flavin reductase (NADPH) (Blvrb) from Mus musculus (Mouse).